Reading from the N-terminus, the 329-residue chain is MKRSAYHEPVLAAQVTDFLVLRPGIYIDGTLGGGGHALAIMRALETAGFEKNSLLIGIDQDDEALHAASTTLSWYKETTVLVKGNFSDVRSILGKVCKQRGLVSRAAGILLDLGVSSSQIDTAGRGFSYLQKGPLDMRMDRCSSTTAADIVNTLDEKELAGLFFRYGEEPRSRMIARHIVNYREQTGAVTGTEVLAAIIRNAERDPHKQIKTLSRVFQALRIEVNQELEVLKQALSDGVDCLDYHGRMAVISYHSLEDRIVKSFFVEKSKSDWGPKGVGMREPLHKGVLGLVTRKPLIADEKEIQENPRARSAKLRVVENVATGGSHAE.

Residues 34–36 (GGH), Asp-59, Phe-86, Asp-112, and Gln-119 each bind S-adenosyl-L-methionine.

It belongs to the methyltransferase superfamily. RsmH family.

The protein localises to the cytoplasm. The catalysed reaction is cytidine(1402) in 16S rRNA + S-adenosyl-L-methionine = N(4)-methylcytidine(1402) in 16S rRNA + S-adenosyl-L-homocysteine + H(+). In terms of biological role, specifically methylates the N4 position of cytidine in position 1402 (C1402) of 16S rRNA. The polypeptide is Ribosomal RNA small subunit methyltransferase H (Chlorobium phaeobacteroides (strain DSM 266 / SMG 266 / 2430)).